The chain runs to 440 residues: Zinc finger MYND domain-containing protein 10 (440 aa).

Cys-394, Cys-397, Cys-405, Cys-408, Cys-414, Cys-418, His-426, and Cys-430 together coordinate Zn(2+). The MYND-type zinc-finger motif lies at 394 to 430; the sequence is CGYCNAEASKRCSRCQNVWYCCRECQVKHWEKHGKTC.

The protein belongs to the ZMYND10 family. As to quaternary structure, interacts (via C-terminus) with DNAAF11 (via CS domain); this interaction stabilizes DNAAF11 at the protein level. Interacts (via C-terminus) with DNAL1; this interaction stabilizes DNAL1 at the protein level. Interacts with DNAAF4, HSPA8, IQUB, RUVBL2 and DYNTL5. Expressed in the testis. Expressed in the tracheal epithelium. Restricted to regions containing motile cilia.

Its subcellular location is the cytoplasm. It localises to the cytoskeleton. The protein resides in the microtubule organizing center. The protein localises to the centrosome. It is found in the centriolar satellite. Its subcellular location is the apical cell membrane. It localises to the dynein axonemal particle. In terms of biological role, plays a role in axonemal structure organization and motility. Involved in axonemal pre-assembly of inner and outer dynein arms (IDA and ODA, respectively) for proper axoneme building for cilia motility. May act by indirectly regulating transcription of dynein proteins. In Mus musculus (Mouse), this protein is Zinc finger MYND domain-containing protein 10 (Zmynd10).